We begin with the raw amino-acid sequence, 256 residues long: Glutamate racemase (256 aa).

Substrate is bound by residues 11 to 12 and 43 to 44; these read DS and YG. The Proton donor/acceptor role is filled by Cys-74. 75-76 is a binding site for substrate; the sequence is NT. Cys-182 functions as the Proton donor/acceptor in the catalytic mechanism. Residue 183–184 coordinates substrate; it reads TH.

The protein belongs to the aspartate/glutamate racemases family.

It catalyses the reaction L-glutamate = D-glutamate. It functions in the pathway cell wall biogenesis; peptidoglycan biosynthesis. In terms of biological role, provides the (R)-glutamate required for cell wall biosynthesis. This Leptospira interrogans serogroup Icterohaemorrhagiae serovar copenhageni (strain Fiocruz L1-130) protein is Glutamate racemase.